The primary structure comprises 357 residues: Putative diaminopimelate epimerase, chloroplastic (357 aa).

A chloroplast-targeting transit peptide spans 1 to 47; the sequence is MSSATAAATATIAAAAAAAAKLAATPAPAPSRRRLTLRGNPTARRCV. Residues C145 and C300 contribute to the active site.

Belongs to the diaminopimelate epimerase family.

It localises to the plastid. The protein localises to the chloroplast. The catalysed reaction is (2S,6S)-2,6-diaminopimelate = meso-2,6-diaminopimelate. It participates in amino-acid biosynthesis; L-lysine biosynthesis via DAP pathway; DL-2,6-diaminopimelate from LL-2,6-diaminopimelate: step 1/1. This chain is Putative diaminopimelate epimerase, chloroplastic (DAPF), found in Oryza sativa subsp. indica (Rice).